The sequence spans 405 residues: Deoxyguanosinetriphosphate triphosphohydrolase-like protein (405 aa).

The HD domain maps to 75-219; that stretch reads RLTHTIEVAQ…AAIADDIAYN (145 aa).

Belongs to the dGTPase family. Type 2 subfamily.

The protein is Deoxyguanosinetriphosphate triphosphohydrolase-like protein of Rhizobium johnstonii (strain DSM 114642 / LMG 32736 / 3841) (Rhizobium leguminosarum bv. viciae).